The following is a 288-amino-acid chain: Acetyl-coenzyme A carboxylase carboxyl transferase subunit beta (288 aa).

In terms of domain architecture, CoA carboxyltransferase N-terminal spans 32-288 (LLLICPKCKK…ILMLHNVEAR (257 aa)). Zn(2+) is bound by residues Cys36, Cys39, Cys55, and Cys58. The C4-type zinc-finger motif lies at 36 to 58 (CPKCKKTLLKSELADNLDVCREC).

This sequence belongs to the AccD/PCCB family. Acetyl-CoA carboxylase is a heterohexamer composed of biotin carboxyl carrier protein (AccB), biotin carboxylase (AccC) and two subunits each of ACCase subunit alpha (AccA) and ACCase subunit beta (AccD). Requires Zn(2+) as cofactor.

The protein localises to the cytoplasm. The enzyme catalyses N(6)-carboxybiotinyl-L-lysyl-[protein] + acetyl-CoA = N(6)-biotinyl-L-lysyl-[protein] + malonyl-CoA. It functions in the pathway lipid metabolism; malonyl-CoA biosynthesis; malonyl-CoA from acetyl-CoA: step 1/1. Functionally, component of the acetyl coenzyme A carboxylase (ACC) complex. Biotin carboxylase (BC) catalyzes the carboxylation of biotin on its carrier protein (BCCP) and then the CO(2) group is transferred by the transcarboxylase to acetyl-CoA to form malonyl-CoA. The sequence is that of Acetyl-coenzyme A carboxylase carboxyl transferase subunit beta from Ruminiclostridium cellulolyticum (strain ATCC 35319 / DSM 5812 / JCM 6584 / H10) (Clostridium cellulolyticum).